Consider the following 209-residue polypeptide: Large ribosomal subunit protein uL3 (209 aa).

The protein belongs to the universal ribosomal protein uL3 family. As to quaternary structure, part of the 50S ribosomal subunit. Forms a cluster with proteins L14 and L19.

Its function is as follows. One of the primary rRNA binding proteins, it binds directly near the 3'-end of the 23S rRNA, where it nucleates assembly of the 50S subunit. The sequence is that of Large ribosomal subunit protein uL3 from Lactiplantibacillus plantarum (strain ATCC BAA-793 / NCIMB 8826 / WCFS1) (Lactobacillus plantarum).